The chain runs to 628 residues: 3-hydroxy-3-methylglutaryl-coenzyme A reductase 2 (628 aa).

A run of 2 helical transmembrane segments spans residues 38 to 58 and 78 to 98; these read PLYL…YFLL and EIVA…FFGI. Residues 99-212 form a linker region; the sequence is DFVQSLIIRP…HEKTVIVTTE (114 aa). N153 carries an N-linked (GlcNAc...) asparagine glycan. The segment at 213-628 is catalytic; it reads EDEEIIKSVV…SSKDMSNLSS (416 aa). Catalysis depends on E307, which acts as the Charge relay system. N-linked (GlcNAc...) asparagine glycosylation is present at N371. K439 acts as the Charge relay system in catalysis. N-linked (GlcNAc...) asparagine glycosylation occurs at N484. Residue D515 is the Charge relay system of the active site. Residue H613 is the Proton donor of the active site. 2 N-linked (GlcNAc...) asparagine glycosylation sites follow: N617 and N625.

This sequence belongs to the HMG-CoA reductase family.

The protein resides in the endoplasmic reticulum membrane. Its subcellular location is the mitochondrion membrane. It localises to the plastid membrane. It catalyses the reaction (R)-mevalonate + 2 NADP(+) + CoA = (3S)-3-hydroxy-3-methylglutaryl-CoA + 2 NADPH + 2 H(+). It participates in metabolic intermediate biosynthesis; (R)-mevalonate biosynthesis; (R)-mevalonate from acetyl-CoA: step 3/3. In terms of biological role, catalyzes the synthesis of mevalonate. The specific precursor of all isoprenoid compounds present in plants. The polypeptide is 3-hydroxy-3-methylglutaryl-coenzyme A reductase 2 (HMG2) (Gossypium hirsutum (Upland cotton)).